Reading from the N-terminus, the 400-residue chain is Tryptophan synthase beta chain (400 aa).

K95 carries the N6-(pyridoxal phosphate)lysine modification.

The protein belongs to the TrpB family. As to quaternary structure, tetramer of two alpha and two beta chains. It depends on pyridoxal 5'-phosphate as a cofactor.

The catalysed reaction is (1S,2R)-1-C-(indol-3-yl)glycerol 3-phosphate + L-serine = D-glyceraldehyde 3-phosphate + L-tryptophan + H2O. It functions in the pathway amino-acid biosynthesis; L-tryptophan biosynthesis; L-tryptophan from chorismate: step 5/5. Its function is as follows. The beta subunit is responsible for the synthesis of L-tryptophan from indole and L-serine. The protein is Tryptophan synthase beta chain of Chlorobaculum tepidum (strain ATCC 49652 / DSM 12025 / NBRC 103806 / TLS) (Chlorobium tepidum).